Here is a 251-residue protein sequence, read N- to C-terminus: Imidazole glycerol phosphate synthase subunit HisF (251 aa).

Active-site residues include D11 and D130.

This sequence belongs to the HisA/HisF family. In terms of assembly, heterodimer of HisH and HisF.

It is found in the cytoplasm. The enzyme catalyses 5-[(5-phospho-1-deoxy-D-ribulos-1-ylimino)methylamino]-1-(5-phospho-beta-D-ribosyl)imidazole-4-carboxamide + L-glutamine = D-erythro-1-(imidazol-4-yl)glycerol 3-phosphate + 5-amino-1-(5-phospho-beta-D-ribosyl)imidazole-4-carboxamide + L-glutamate + H(+). It participates in amino-acid biosynthesis; L-histidine biosynthesis; L-histidine from 5-phospho-alpha-D-ribose 1-diphosphate: step 5/9. In terms of biological role, IGPS catalyzes the conversion of PRFAR and glutamine to IGP, AICAR and glutamate. The HisF subunit catalyzes the cyclization activity that produces IGP and AICAR from PRFAR using the ammonia provided by the HisH subunit. The sequence is that of Imidazole glycerol phosphate synthase subunit HisF from Flavobacterium psychrophilum (strain ATCC 49511 / DSM 21280 / CIP 103535 / JIP02/86).